The sequence spans 203 residues: Ribosomal RNA small subunit methyltransferase G (203 aa).

S-adenosyl-L-methionine-binding positions include G73, L78, 124–125 (VE), and R138.

It belongs to the methyltransferase superfamily. RNA methyltransferase RsmG family.

Its subcellular location is the cytoplasm. It carries out the reaction guanosine(527) in 16S rRNA + S-adenosyl-L-methionine = N(7)-methylguanosine(527) in 16S rRNA + S-adenosyl-L-homocysteine. Its function is as follows. Specifically methylates the N7 position of guanine in position 527 of 16S rRNA. In Glaesserella parasuis serovar 5 (strain SH0165) (Haemophilus parasuis), this protein is Ribosomal RNA small subunit methyltransferase G.